Reading from the N-terminus, the 275-residue chain is 3-methyl-2-oxobutanoate hydroxymethyltransferase (275 aa).

The Mg(2+) site is built by aspartate 49 and aspartate 88. 3-methyl-2-oxobutanoate-binding positions include 49 to 50 (DS), aspartate 88, and lysine 118. A Mg(2+)-binding site is contributed by glutamate 120. The active-site Proton acceptor is glutamate 187.

It belongs to the PanB family. Homodecamer; pentamer of dimers. It depends on Mg(2+) as a cofactor.

It localises to the cytoplasm. It carries out the reaction 3-methyl-2-oxobutanoate + (6R)-5,10-methylene-5,6,7,8-tetrahydrofolate + H2O = 2-dehydropantoate + (6S)-5,6,7,8-tetrahydrofolate. The protein operates within cofactor biosynthesis; (R)-pantothenate biosynthesis; (R)-pantoate from 3-methyl-2-oxobutanoate: step 1/2. Its function is as follows. Catalyzes the reversible reaction in which hydroxymethyl group from 5,10-methylenetetrahydrofolate is transferred onto alpha-ketoisovalerate to form ketopantoate. In Brucella suis (strain ATCC 23445 / NCTC 10510), this protein is 3-methyl-2-oxobutanoate hydroxymethyltransferase.